The primary structure comprises 368 residues: Isopentenyl-diphosphate delta-isomerase (368 aa).

7–8 (RK) serves as a coordination point for substrate. FMN is bound by residues Thr-65, 66–68 (GMT), Ser-96, and Asn-125. 96–98 (SQR) is a binding site for substrate. A substrate-binding site is contributed by Gln-160. A Mg(2+)-binding site is contributed by Glu-161. FMN is bound by residues Lys-193, Ser-218, Thr-223, 275–277 (GIR), and 296–297 (AL).

Belongs to the IPP isomerase type 2 family. As to quaternary structure, homooctamer. Dimer of tetramers. Requires FMN as cofactor. It depends on NADPH as a cofactor. Mg(2+) is required as a cofactor.

It localises to the cytoplasm. It catalyses the reaction isopentenyl diphosphate = dimethylallyl diphosphate. In terms of biological role, involved in the biosynthesis of isoprenoids. Catalyzes the 1,3-allylic rearrangement of the homoallylic substrate isopentenyl (IPP) to its allylic isomer, dimethylallyl diphosphate (DMAPP). The chain is Isopentenyl-diphosphate delta-isomerase from Saccharolobus solfataricus (strain ATCC 35092 / DSM 1617 / JCM 11322 / P2) (Sulfolobus solfataricus).